The sequence spans 1131 residues: PPi-type phosphoenolpyruvate carboxykinase (1131 aa).

Belongs to the PPi-type phosphoenolpyruvate carboxykinase family. In terms of assembly, monomer and trimer; forms heterotrimers with PEPCK2 and PEPCK3.

It carries out the reaction oxaloacetate + diphosphate = phosphoenolpyruvate + phosphate + CO2. Inorganic pyrophosphate (PPi)-dependent phosphoenolpyruvate carboxykinase, which regulates the carbon flow of the central metabolism by fixing CO(2) to phosphoenolpyruvate to produce oxaloacetate. Can also produce pyruvate and diphosphate from phosphoenolpyruvate and phosphate. The chain is PPi-type phosphoenolpyruvate carboxykinase from Propionibacterium freudenreichii subsp. freudenreichii.